The sequence spans 67 residues: Probable archaeal histone 3 (67 aa).

2 interaction with DNA regions span residues 20 to 22 (RVS) and 54 to 57 (KTVK).

It belongs to the archaeal histone HMF family. Homodimer or heterodimer with another histone. Dimers then assemble into higher oligomers, with the DNA wrapped around the protein core.

The protein resides in the cytoplasm. Its subcellular location is the chromosome. Binds and compact DNA (95 to 150 base pairs) to form nucleosome-like structures that contain positive DNA supercoils. Increases the resistance of DNA to thermal denaturation (in vitro). The sequence is that of Probable archaeal histone 3 from Methanocaldococcus jannaschii (strain ATCC 43067 / DSM 2661 / JAL-1 / JCM 10045 / NBRC 100440) (Methanococcus jannaschii).